Here is a 348-residue protein sequence, read N- to C-terminus: Methylthioribose-1-phosphate isomerase (348 aa).

Residues 51-53 (RGA), R94, and Q199 contribute to the substrate site. Residue D240 is the Proton donor of the active site. 250–251 (NK) serves as a coordination point for substrate.

Belongs to the eIF-2B alpha/beta/delta subunits family. MtnA subfamily.

It carries out the reaction 5-(methylsulfanyl)-alpha-D-ribose 1-phosphate = 5-(methylsulfanyl)-D-ribulose 1-phosphate. Its pathway is amino-acid biosynthesis; L-methionine biosynthesis via salvage pathway; L-methionine from S-methyl-5-thio-alpha-D-ribose 1-phosphate: step 1/6. Catalyzes the interconversion of methylthioribose-1-phosphate (MTR-1-P) into methylthioribulose-1-phosphate (MTRu-1-P). The sequence is that of Methylthioribose-1-phosphate isomerase from Nitrosococcus oceani (strain ATCC 19707 / BCRC 17464 / JCM 30415 / NCIMB 11848 / C-107).